A 330-amino-acid chain; its full sequence is Methionine import ATP-binding protein MetN (330 aa).

The region spanning Ile2–Phe241 is the ABC transporter domain. Gly38–Ser45 lines the ATP pocket.

The protein belongs to the ABC transporter superfamily. Methionine importer (TC 3.A.1.24) family. As to quaternary structure, the complex is composed of two ATP-binding proteins (MetN), two transmembrane proteins (MetI) and a solute-binding protein (MetQ).

The protein localises to the cell inner membrane. The catalysed reaction is L-methionine(out) + ATP + H2O = L-methionine(in) + ADP + phosphate + H(+). The enzyme catalyses D-methionine(out) + ATP + H2O = D-methionine(in) + ADP + phosphate + H(+). Its function is as follows. Part of the ABC transporter complex MetNIQ involved in methionine import. Responsible for energy coupling to the transport system. The polypeptide is Methionine import ATP-binding protein MetN (Myxococcus xanthus (strain DK1622)).